The following is a 363-amino-acid chain: METRFGASPPYTVGVEEEFQLIDPRTRALTPKIEEVLAAGDGELPEGTLASELSASCLEVRTPAYASVAELARALPALRARVRRLAERSGARLVSAGAHPFSPAAEQPITGKPRYRKVDEEMGWPARMQAIYGLHVHVAVPGGEEAVRAVSALARHVPLFIALSANSPFWEGRDTRLASVRAKVFGLIPRSGLPPRFASWEEFVRHVERLVRAGSIRDYTFCWWDVRPHPKLGTVELRAPDAQTDPGRTAALAALCQCLAAAAEEFEPEDPLLTEENKWRATRHGLEAELYDFSGQRTVAARRAAEELVGRLLPVARELGCEAELEGVLEISRSATGADRQRAVLAREGSLKSVVDYLAEATA.

It belongs to the glutamate--cysteine ligase type 2 family. YbdK subfamily.

It carries out the reaction L-cysteine + L-glutamate + ATP = gamma-L-glutamyl-L-cysteine + ADP + phosphate + H(+). Functionally, ATP-dependent carboxylate-amine ligase which exhibits weak glutamate--cysteine ligase activity. The protein is Putative glutamate--cysteine ligase 2-3 of Rubrobacter xylanophilus (strain DSM 9941 / JCM 11954 / NBRC 16129 / PRD-1).